The chain runs to 621 residues: 1-deoxy-D-xylulose-5-phosphate synthase (621 aa).

Thiamine diphosphate is bound by residues His80 and 121–123; that span reads GHS. Mg(2+) is bound at residue Asp152. Residues 153 to 154, Asn181, Tyr288, and Glu370 contribute to the thiamine diphosphate site; that span reads GA. Asn181 serves as a coordination point for Mg(2+).

The protein belongs to the transketolase family. DXPS subfamily. Homodimer. The cofactor is Mg(2+). Requires thiamine diphosphate as cofactor.

The enzyme catalyses D-glyceraldehyde 3-phosphate + pyruvate + H(+) = 1-deoxy-D-xylulose 5-phosphate + CO2. It functions in the pathway metabolic intermediate biosynthesis; 1-deoxy-D-xylulose 5-phosphate biosynthesis; 1-deoxy-D-xylulose 5-phosphate from D-glyceraldehyde 3-phosphate and pyruvate: step 1/1. In terms of biological role, catalyzes the acyloin condensation reaction between C atoms 2 and 3 of pyruvate and glyceraldehyde 3-phosphate to yield 1-deoxy-D-xylulose-5-phosphate (DXP). This Vibrio parahaemolyticus serotype O3:K6 (strain RIMD 2210633) protein is 1-deoxy-D-xylulose-5-phosphate synthase.